A 610-amino-acid polypeptide reads, in one-letter code: UvrABC system protein C (610 aa).

Residues His-13–Val-91 form the GIY-YIG domain. Positions Gly-201–Val-236 constitute a UVR domain.

It belongs to the UvrC family. Interacts with UvrB in an incision complex.

It localises to the cytoplasm. The UvrABC repair system catalyzes the recognition and processing of DNA lesions. UvrC both incises the 5' and 3' sides of the lesion. The N-terminal half is responsible for the 3' incision and the C-terminal half is responsible for the 5' incision. This is UvrABC system protein C from Actinobacillus pleuropneumoniae serotype 3 (strain JL03).